A 383-amino-acid polypeptide reads, in one-letter code: Protein FAM217B (383 aa).

Disordered stretches follow at residues 1 to 70, 89 to 115, 200 to 222, 232 to 251, 284 to 325, and 338 to 383; these read MNAG…CQGA, ADED…PPDL, KAKG…KSPG, SKPL…RKKA, QTLE…HIRV, and SCKA…YKLK. Polar residues predominate over residues 8–43; sequence NKVQHSKNSSGKRQSKSQVPHASSQPRSSLTAVTQP. Positions 44–56 are enriched in basic and acidic residues; that stretch reads TEEKLKESISPEA. Residues 374–383 are compositionally biased toward polar residues; sequence GVKQNTYKLK.

The protein belongs to the FAM217 family.

The chain is Protein FAM217B (FAM217B) from Homo sapiens (Human).